Reading from the N-terminus, the 196-residue chain is Pyridoxal 5'-phosphate synthase subunit PdxT (196 aa).

47 to 49 (GES) is a binding site for L-glutamine. The Nucleophile role is filled by Cys-79. L-glutamine is bound by residues Arg-106 and 134–135 (IR). Catalysis depends on charge relay system residues His-170 and Glu-172.

This sequence belongs to the glutaminase PdxT/SNO family. In the presence of PdxS, forms a dodecamer of heterodimers. Only shows activity in the heterodimer.

The catalysed reaction is aldehydo-D-ribose 5-phosphate + D-glyceraldehyde 3-phosphate + L-glutamine = pyridoxal 5'-phosphate + L-glutamate + phosphate + 3 H2O + H(+). The enzyme catalyses L-glutamine + H2O = L-glutamate + NH4(+). It functions in the pathway cofactor biosynthesis; pyridoxal 5'-phosphate biosynthesis. Functionally, catalyzes the hydrolysis of glutamine to glutamate and ammonia as part of the biosynthesis of pyridoxal 5'-phosphate. The resulting ammonia molecule is channeled to the active site of PdxS. The chain is Pyridoxal 5'-phosphate synthase subunit PdxT from Bacillus licheniformis (strain ATCC 14580 / DSM 13 / JCM 2505 / CCUG 7422 / NBRC 12200 / NCIMB 9375 / NCTC 10341 / NRRL NRS-1264 / Gibson 46).